A 388-amino-acid polypeptide reads, in one-letter code: Alanine racemase, catabolic (388 aa).

K46 (proton acceptor; specific for D-alanine) is an active-site residue. K46 carries the post-translational modification N6-(pyridoxal phosphate)lysine. R145 contacts substrate. The active-site Proton acceptor; specific for L-alanine is the Y267. Residue M315 coordinates substrate.

The protein belongs to the alanine racemase family. It depends on pyridoxal 5'-phosphate as a cofactor.

The enzyme catalyses L-alanine = D-alanine. Isomerizes L-alanine to D-alanine which is then oxidized to pyruvate by DadA. The protein is Alanine racemase, catabolic (dadB) of Agrobacterium fabrum (strain C58 / ATCC 33970) (Agrobacterium tumefaciens (strain C58)).